Consider the following 64-residue polypeptide: Small ribosomal subunit protein bS21 (64 aa).

The protein belongs to the bacterial ribosomal protein bS21 family.

The protein is Small ribosomal subunit protein bS21 of Karelsulcia muelleri (strain GWSS) (Sulcia muelleri).